A 217-amino-acid chain; its full sequence is Small ribosomal subunit protein uS3 (217 aa).

Residues 40–110 (IRDLINKWFN…EVYINIHEVR (71 aa)) enclose the KH type-2 domain.

It belongs to the universal ribosomal protein uS3 family. As to quaternary structure, part of the 30S ribosomal subunit. Forms a tight complex with proteins S10 and S14.

Binds the lower part of the 30S subunit head. Binds mRNA in the 70S ribosome, positioning it for translation. This is Small ribosomal subunit protein uS3 from Rickettsia typhi (strain ATCC VR-144 / Wilmington).